Reading from the N-terminus, the 100-residue chain is Dromyosuppressin (100 aa).

Positions 1 to 24 (MSFAQFFVACCLAIVLLAVSNTRA) are cleaved as a signal peptide. A propeptide spanning residues 25–84 (AVQGPPLCQSGIVEEMPPHIRKVCQALENSDQLTSALKSYINNEASALVANSDDLLKNYN) is cleaved from the precursor. Residue Phe-96 is modified to Phenylalanine amide.

Belongs to the myosuppressin family.

The protein localises to the secreted. Myoinhibiting neuropeptide. This Drosophila melanogaster (Fruit fly) protein is Dromyosuppressin.